Consider the following 456-residue polypeptide: Bifunctional protein GlmU (456 aa).

The segment at 1-229 (MSTSPLSVVI…LSEVEGVNNR (229 aa)) is pyrophosphorylase. UDP-N-acetyl-alpha-D-glucosamine is bound by residues 11–14 (LAAG), lysine 25, glutamine 76, 81–82 (GT), 103–105 (YGD), glycine 140, glutamate 154, asparagine 169, and asparagine 227. Aspartate 105 is a Mg(2+) binding site. Mg(2+) is bound at residue asparagine 227. The tract at residues 230 to 250 (LQLSALERAYQQQQAQRLLLA) is linker. Residues 251–456 (GVMLTDPARF…SGWERPVKKK (206 aa)) form an N-acetyltransferase region. UDP-N-acetyl-alpha-D-glucosamine contacts are provided by arginine 333 and lysine 351. Histidine 363 serves as the catalytic Proton acceptor. UDP-N-acetyl-alpha-D-glucosamine-binding residues include tyrosine 366 and asparagine 377. Acetyl-CoA contacts are provided by residues alanine 380, 386–387 (NY), serine 405, alanine 423, and arginine 440.

It in the N-terminal section; belongs to the N-acetylglucosamine-1-phosphate uridyltransferase family. The protein in the C-terminal section; belongs to the transferase hexapeptide repeat family. As to quaternary structure, homotrimer. It depends on Mg(2+) as a cofactor.

It localises to the cytoplasm. It carries out the reaction alpha-D-glucosamine 1-phosphate + acetyl-CoA = N-acetyl-alpha-D-glucosamine 1-phosphate + CoA + H(+). The enzyme catalyses N-acetyl-alpha-D-glucosamine 1-phosphate + UTP + H(+) = UDP-N-acetyl-alpha-D-glucosamine + diphosphate. The protein operates within nucleotide-sugar biosynthesis; UDP-N-acetyl-alpha-D-glucosamine biosynthesis; N-acetyl-alpha-D-glucosamine 1-phosphate from alpha-D-glucosamine 6-phosphate (route II): step 2/2. Its pathway is nucleotide-sugar biosynthesis; UDP-N-acetyl-alpha-D-glucosamine biosynthesis; UDP-N-acetyl-alpha-D-glucosamine from N-acetyl-alpha-D-glucosamine 1-phosphate: step 1/1. It participates in bacterial outer membrane biogenesis; LPS lipid A biosynthesis. In terms of biological role, catalyzes the last two sequential reactions in the de novo biosynthetic pathway for UDP-N-acetylglucosamine (UDP-GlcNAc). The C-terminal domain catalyzes the transfer of acetyl group from acetyl coenzyme A to glucosamine-1-phosphate (GlcN-1-P) to produce N-acetylglucosamine-1-phosphate (GlcNAc-1-P), which is converted into UDP-GlcNAc by the transfer of uridine 5-monophosphate (from uridine 5-triphosphate), a reaction catalyzed by the N-terminal domain. This Edwardsiella ictaluri (strain 93-146) protein is Bifunctional protein GlmU.